Here is a 61-residue protein sequence, read N- to C-terminus: Temporin-CDYa (61 aa).

A signal peptide spans 1–22; it reads MFPLKKSLLLLFFLGTINFSFC. Residues 23-44 constitute a propeptide that is removed on maturation; sequence EEERNAEEERRDDPEERDVAME. Leu-59 carries the leucine amide modification.

Belongs to the frog skin active peptide (FSAP) family. Temporin subfamily. Expressed by the skin glands.

The protein resides in the secreted. Antimicrobial peptide. The chain is Temporin-CDYa from Rana dybowskii (Dybovsky's frog).